Consider the following 174-residue polypeptide: IAGGEAIYAAGGGRCSLGFNVRSSSGATYALTAGHCTEIASTWYTNSGQTSLLGTRAGTSFPGNDYGLIRHSNASAADGRVYLYNGSYRDITGAGNAYVGQTVQRSGSTTGLHSGRVTGLNATVNYGGGDIVSGLIQTNVCAEPGDSGGALFAGSTALGLTSGGSGNCRTGGTT.

Cysteine 15 and cysteine 36 are oxidised to a cystine. Catalysis depends on charge relay system residues histidine 35, aspartate 65, and serine 147. A disulfide bond links cysteine 141 and cysteine 168.

This sequence belongs to the peptidase S1 family.

The protein localises to the secreted. In terms of biological role, broad substrate specificity. This chain is Serine protease 2, found in Streptomyces fradiae (Streptomyces roseoflavus).